The following is a 295-amino-acid chain: GATA zinc finger domain-containing protein 23 (295 aa).

Low complexity predominate over residues alanine 115–valine 126. Residues alanine 115–proline 240 form a disordered region. Residues isoleucine 127–leucine 145 show a composition bias toward polar residues. The segment covering threonine 146–lysine 163 has biased composition (low complexity). Basic residues predominate over residues arginine 164–lysine 174. Positions serine 181–glutamate 227 are enriched in low complexity. A DNA-binding region (a.T hook) is located at residues threonine 229–aspartate 241. Residues cysteine 243 to cysteine 270 form a GATA-type zinc finger.

The chain is GATA zinc finger domain-containing protein 23 (gtaW) from Dictyostelium discoideum (Social amoeba).